The following is a 260-amino-acid chain: Acetylglutamate kinase (260 aa).

Residues 41 to 42 (GG), Arg63, and Asn156 contribute to the substrate site.

This sequence belongs to the acetylglutamate kinase family. ArgB subfamily.

It localises to the cytoplasm. It carries out the reaction N-acetyl-L-glutamate + ATP = N-acetyl-L-glutamyl 5-phosphate + ADP. The protein operates within amino-acid biosynthesis; L-arginine biosynthesis; N(2)-acetyl-L-ornithine from L-glutamate: step 2/4. In terms of biological role, catalyzes the ATP-dependent phosphorylation of N-acetyl-L-glutamate. In Halalkalibacterium halodurans (strain ATCC BAA-125 / DSM 18197 / FERM 7344 / JCM 9153 / C-125) (Bacillus halodurans), this protein is Acetylglutamate kinase.